A 659-amino-acid polypeptide reads, in one-letter code: Protein NEDD1 (659 aa).

WD repeat units lie at residues 1-31, 32-71, 75-114, 117-156, 160-200, 204-244, 246-285, and 289-332; these read MQEN…FNPH, TAPH…PVPL, GEGQ…VHRS, DHKD…SSTP, GSNQ…PYHN, THKA…LVKT, VADA…SPIK, and AHKT…SAGG. T382 is subject to Phosphothreonine; by PLK1. The segment at 383–433 is disordered; it reads LSKEAESGKNQDFSNFDDSGKSSLGDMFSPVRDDAVVSKGGDESIGKGDGL. S411 carries the post-translational modification Phosphoserine. Residues 413-432 show a composition bias toward basic and acidic residues; the sequence is VRDDAVVSKGGDESIGKGDG. Position 426 is a phosphoserine; by PLK1 (S426). Phosphoserine occurs at positions 468 and 515. Over residues 508–522 the composition is skewed to polar residues; it reads ETGNLNASPSSNQTR. The tract at residues 508–531 is disordered; the sequence is ETGNLNASPSSNQTRSPEKFEKPE. Residue T549 is modified to Phosphothreonine; by CDK1. S636 carries the post-translational modification Phosphoserine; by PLK1.

Interacts with FAM29A. Interacts with HSPA1A and HSPA1B. Interacts with gamma-tubulin in a HSPA1A/B-dependent manner. Post-translationally, during mitosis, prior phosphorylation on Thr-549 by CDK1 promotes subsequent phosphorylation by PLK1 on Thr-382, Ser-426 and Ser-636. Phosphorylated NEDD1 can interact with gamma-tubulin for targeting the gamma-tubulin ring complex (gTuRC) to the centrosome, an important step for spindle formation.

Its subcellular location is the cytoplasm. The protein resides in the cytoskeleton. It is found in the microtubule organizing center. It localises to the centrosome. In terms of biological role, required for mitosis progression. Promotes the nucleation of microtubules from the spindle. The protein is Protein NEDD1 (NEDD1) of Bos taurus (Bovine).